The sequence spans 445 residues: GTPase Der (445 aa).

EngA-type G domains follow at residues 3–167 (PVIA…YAGQ) and 180–353 (VKIA…AAAM). GTP-binding positions include 9 to 16 (GRPNVGKS), 56 to 60 (DTGGF), 119 to 122 (NKAE), 186 to 193 (GRPNVGKS), 233 to 237 (DTAGL), and 298 to 301 (NKWD). The KH-like domain occupies 354–438 (AKLPTPKLTR…PLRIEFRSST (85 aa)).

This sequence belongs to the TRAFAC class TrmE-Era-EngA-EngB-Septin-like GTPase superfamily. EngA (Der) GTPase family. In terms of assembly, associates with the 50S ribosomal subunit.

Functionally, GTPase that plays an essential role in the late steps of ribosome biogenesis. This Paraburkholderia xenovorans (strain LB400) protein is GTPase Der.